The chain runs to 86 residues: Small ribosomal subunit protein bS20 (86 aa).

Basic residues predominate over residues 1–11 (MANIKQQKKRN). Residues 1–20 (MANIKQQKKRNKTNEKRRLQ) form a disordered region.

It belongs to the bacterial ribosomal protein bS20 family.

In terms of biological role, binds directly to 16S ribosomal RNA. The sequence is that of Small ribosomal subunit protein bS20 from Aster yellows witches'-broom phytoplasma (strain AYWB).